A 317-amino-acid chain; its full sequence is Apolipoprotein E (317 aa).

The first 18 residues, 1 to 18 (MKVLWAALLVTFLAGCQA), serve as a signal peptide directing secretion. 8 tandem repeats follow at residues 80–101 (ALMD…EQLT), 102–123 (PVAE…ARLG), 124–145 (ADME…AMLG), 146–167 (QSTE…KRLL), 168–189 (RDAD…EGAE), 190–211 (RGVS…VRAA), 212–233 (TVGS…ERLR), and 234–255 (ARME…EQVA). The tract at residues 80–255 (ALMDETMKEL…RLDEVKEQVA (176 aa)) is 8 X 22 AA approximate tandem repeats. At M143 the chain carries Methionine sulfoxide. S147 bears the Phosphoserine mark. The LDL and other lipoprotein receptors binding stretch occupies residues 158–168 (HLRKLRKRLLR). 162–165 (LRKR) is a heparin binding site. A lipid-binding and lipoprotein association region spans residues 210 to 290 (AATVGSVAGK…SWFEPLVEDM (81 aa)). 229–236 (GERLRARM) contributes to the heparin binding site. The tract at residues 266-317 (QQIRLQAEAFQARLKSWFEPLVEDMQRQWAGLVEKVQAAVGTSAAPVPSDNH) is homooligomerization. The specificity for association with VLDL stretch occupies residues 278–290 (RLKSWFEPLVEDM).

Belongs to the apolipoprotein A1/A4/E family. Homotetramer. May interact with ABCA1; functionally associated with ABCA1 in the biogenesis of HDLs. May interact with APP/A4 amyloid-beta peptide; the interaction is extremely stable in vitro but its physiological significance is unclear. May interact with MAPT. May interact with MAP2. In the cerebrospinal fluid, interacts with secreted SORL1. Interacts with PMEL; this allows the loading of PMEL luminal fragment on ILVs to induce fibril nucleation. Post-translationally, APOE exists as multiple glycosylated and sialylated glycoforms within cells and in plasma. The extent of glycosylation and sialylation are tissue and context specific. In terms of processing, glycated in plasma VLDL. Phosphorylated by FAM20C in the extracellular medium.

The protein localises to the secreted. It localises to the extracellular space. The protein resides in the extracellular matrix. It is found in the extracellular vesicle. Its subcellular location is the endosome. The protein localises to the multivesicular body. In terms of biological role, APOE is an apolipoprotein, a protein associating with lipid particles, that mainly functions in lipoprotein-mediated lipid transport between organs via the plasma and interstitial fluids. APOE is a core component of plasma lipoproteins and is involved in their production, conversion and clearance. Apolipoproteins are amphipathic molecules that interact both with lipids of the lipoprotein particle core and the aqueous environment of the plasma. As such, APOE associates with chylomicrons, chylomicron remnants, very low density lipoproteins (VLDL) and intermediate density lipoproteins (IDL) but shows a preferential binding to high-density lipoproteins (HDL). It also binds a wide range of cellular receptors including the LDL receptor/LDLR, the LDL receptor-related proteins LRP1, LRP2 and LRP8 and the very low-density lipoprotein receptor/VLDLR that mediate the cellular uptake of the APOE-containing lipoprotein particles. Finally, APOE also has a heparin-binding activity and binds heparan-sulfate proteoglycans on the surface of cells, a property that supports the capture and the receptor-mediated uptake of APOE-containing lipoproteins by cells. A main function of APOE is to mediate lipoprotein clearance through the uptake of chylomicrons, VLDLs, and HDLs by hepatocytes. APOE is also involved in the biosynthesis by the liver of VLDLs as well as their uptake by peripheral tissues ensuring the delivery of triglycerides and energy storage in muscle, heart and adipose tissues. By participating in the lipoprotein-mediated distribution of lipids among tissues, APOE plays a critical role in plasma and tissues lipid homeostasis. APOE is also involved in two steps of reverse cholesterol transport, the HDLs-mediated transport of cholesterol from peripheral tissues to the liver, and thereby plays an important role in cholesterol homeostasis. First, it is functionally associated with ABCA1 in the biogenesis of HDLs in tissues. Second, it is enriched in circulating HDLs and mediates their uptake by hepatocytes. APOE also plays an important role in lipid transport in the central nervous system, regulating neuron survival and sprouting. This chain is Apolipoprotein E (APOE), found in Pongo pygmaeus (Bornean orangutan).